The primary structure comprises 445 residues: RCC1 domain-containing protein RUG3, mitochondrial (445 aa).

Residues 1–22 (MAALSHRLRSFTRRFSSTRTTQ) constitute a mitochondrion transit peptide. RCC1 repeat units lie at residues 47–101 (TLQL…DSSS), 118–169 (DGDL…ALTH), 171–221 (GDVF…AITE), 222–279 (SGEL…ALTK), 280–331 (EGQL…ALTE), 333–383 (GKVL…AITD), and 385–442 (GELW…CLVS).

As to quaternary structure, interacts with ATM. Mostly expressed in roots and rosette leaves of young seedlings, and, to a lower extent, in the flowers and siliques of mature plants. Preferentially expressed in the vascular tissues.

The protein resides in the mitochondrion. In terms of biological role, regulates DNA damage response (DDR) synergistically with ATM. Together with ATM, involved in the splicing of the ND2/NAD2 mRNA. Required for the accumulation of mitochondrial respiratory chain complex I. Negative regulator of plant responses to abscisic acid (ABA). May have a pivotal role in vegetative growth and the phase transition from vegetative to reproductive growth. This is RCC1 domain-containing protein RUG3, mitochondrial from Arabidopsis thaliana (Mouse-ear cress).